The sequence spans 63 residues: MGSTSDKIAGKTNEVAGKVKKNVGEATGNNELRAKGAAQETKGKVQTSVGKAKDAVKGAVDRM.

A disordered region spans residues 1–63; sequence MGSTSDKIAG…DAVKGAVDRM (63 aa). The span at 51–63 shows a compositional bias: basic and acidic residues; that stretch reads KAKDAVKGAVDRM.

Belongs to the UPF0337 (CsbD) family.

In Agrobacterium fabrum (strain C58 / ATCC 33970) (Agrobacterium tumefaciens (strain C58)), this protein is UPF0337 protein Atu0782.